Consider the following 430-residue polypeptide: Nucleoporin NUP42 (430 aa).

A disordered region spans residues 1-68; the sequence is MSAFGNPFTS…AFGMPQFGTN (68 aa). The stretch at 2 to 5 is one SXFG 1 repeat; the sequence is SAFG. Residues 15–36 are compositionally biased toward polar residues; the sequence is NLSNTSGINPFTNNAASTNNMG. SAFGXPXFG repeat units lie at residues 38-46 and 58-66; these read SAFGRPSFG and SAFGMPQFG. Low complexity predominate over residues 45–68; the sequence is FGTANTMTGGTTTSAFGMPQFGTN. An SXFG 2 repeat occupies 78–81; sequence SAFG. 2 SAFGXPXFG repeats span residues 90 to 98 and 112 to 120; these read SAFGAPAFG and SAFGAPSFG. The interactions with CRM1 and GFD1 stretch occupies residues 121 to 230; that stretch reads STGFGAMAAT…QNTSTSSGTG (110 aa). FG repeat units lie at residues 124–125 and 134–135; these read FG. S137 bears the Phosphoserine mark. The stretch at 143–151 is one SAFGXPXFG 5 repeat; sequence SAFGQPAFG. 2 SXFG repeats span residues 168 to 171 and 182 to 185; these read SAFG and SPFG. Positions 180 to 294 are disordered; it reads TTSPFGSLQQ…QSPFSGGSGG (115 aa). Residues 186–201 are compositionally biased toward low complexity; it reads SLQQNASQNASSTSSA. The stretch at 200–208 is one SAFGXPXFG 6 repeat; it reads SAFGKPTFG. The segment covering 209–230 has biased composition (polar residues); sequence AATNTQSPFGTIQNTSTSSGTG. SXFG repeat units lie at residues 215–218 and 232–235; these read SPFG. 2 stretches are compositionally biased toward polar residues: residues 237-252 and 260-285; these read FGTN…NLQS and PFGT…TNNQ. SXFG repeat units follow at residues 259-262 and 277-280; these read SPFG and SAFG. One copy of the FG 3 repeat lies at 296-297; that stretch reads FG. The residue at position 298 (S298) is a Phosphoserine. Residues 312–315 form an SXFG 9 repeat; sequence SSFG. 3 FG repeats span residues 319 to 322, 339 to 340, and 361 to 364; these read FSFG, FG, and FGFG. The tract at residues 319 to 346 is disordered; it reads FSFGITPQNDANKVSQSNPSFGQTMPNT. A compositionally biased stretch (polar residues) spans 323–346; it reads ITPQNDANKVSQSNPSFGQTMPNT. The interval 365-430 is interaction with GLE1; it reads QQQMNATNVN…DIPPPPALVA (66 aa).

Component of the nuclear pore complex (NPC). NPC constitutes the exclusive means of nucleocytoplasmic transport. NPCs allow the passive diffusion of ions and small molecules and the active, nuclear transport receptor-mediated bidirectional transport of macromolecules such as proteins, RNAs, ribonucleoparticles (RNPs), and ribosomal subunits across the nuclear envelope. Due to its 8-fold rotational symmetry, all subunits are present with 8 copies or multiples thereof. NUP42 interacts with the NUP82 subcomplex. It interacts directly with GLE1, and through its FG repeats with GFD1, the heterodimeric mRNA transport factor MEX67/MTR2, and the karyopherin CRM1.

It localises to the nucleus. The protein localises to the nuclear pore complex. The protein resides in the nucleus membrane. Functionally, functions as a component of the nuclear pore complex (NPC). NPC components, collectively referred to as nucleoporins (NUPs), can play the role of both NPC structural components and of docking or interaction partners for transiently associated nuclear transport factors. Active directional transport is assured by both, a Phe-Gly (FG) repeat affinity gradient for these transport factors across the NPC and a transport cofactor concentration gradient across the nuclear envelope (GSP1 and GSP2 GTPases associated predominantly with GTP in the nucleus, with GDP in the cytoplasm). NUP42 is specifically important for nuclear protein and mRNA export. The protein is Nucleoporin NUP42 (NUP42) of Saccharomyces cerevisiae (strain ATCC 204508 / S288c) (Baker's yeast).